A 258-amino-acid chain; its full sequence is Ribonuclease HII (258 aa).

Positions 1-20 (MRVAPSGGPPHHHAMIRATP) are disordered. Positions 10–20 (PHHHAMIRATP) are enriched in basic residues. An RNase H type-2 domain is found at 48–236 (WPVAGCDEVG…VVAARERHRA (189 aa)). Residues aspartate 54, glutamate 55, and aspartate 145 each coordinate a divalent metal cation.

Belongs to the RNase HII family. Mn(2+) is required as a cofactor. Mg(2+) serves as cofactor.

The protein resides in the cytoplasm. It carries out the reaction Endonucleolytic cleavage to 5'-phosphomonoester.. Functionally, endonuclease that specifically degrades the RNA of RNA-DNA hybrids. The protein is Ribonuclease HII of Nitrobacter winogradskyi (strain ATCC 25391 / DSM 10237 / CIP 104748 / NCIMB 11846 / Nb-255).